Here is a 310-residue protein sequence, read N- to C-terminus: GPN-loop GTPase 2 (310 aa).

At alanine 2 the chain carries N-acetylalanine. A GTP-binding site is contributed by 19–24; that stretch reads GSGKTT. Positions 76 to 78 match the Gly-Pro-Asn (GPN)-loop; involved in dimer interface motif; that stretch reads GPN. 178–181 lines the GTP pocket; it reads SKMD.

It belongs to the GPN-loop GTPase family. Heterodimers with GPN1 or GPN3. Binds to RNA polymerase II (RNAPII).

Its function is as follows. Small GTPase required for proper localization of RNA polymerase II and III (RNAPII and RNAPIII). May act at an RNAP assembly step prior to nuclear import. This Rattus norvegicus (Rat) protein is GPN-loop GTPase 2.